The chain runs to 379 residues: Multicilin (379 aa).

2 disordered regions span residues 26-46 (SRRSLGKPGKPERKFVPPWKS) and 87-106 (LLGTEAPPSGDSPASQNPSL). Residues 175–223 (EQYWKEVADQNQRALGTALIENNQLHVTLTQKQEEIASLRERNVQLKEL) are a coiled coil. Residues 289 to 309 (LQNRDPKRPRLQQEPDSKDCS) are compositionally biased toward basic and acidic residues. The tract at residues 289-311 (LQNRDPKRPRLQQEPDSKDCSTR) is disordered.

This sequence belongs to the geminin family. In terms of assembly, heterodimer (via coiled-coil domain) with GMNN (via coiled-coil domain); targets GMNN to the nucleus. Can form homodimers (in vitro, via coiled-coil domain), but these are much less stable than the heterodimer formed with GMNN.

Its subcellular location is the nucleus. Functionally, transcription regulator specifically required for multiciliate cell differentiation. Acts in a multiprotein complex containing E2F4 and E2F5 that binds and activates genes required for centriole biogenesis. Required for the deuterosome-mediated acentriolar pathway. Plays a role in mitotic cell cycle progression by promoting cell cycle exit. Modulates GMNN activity by reducing its affinity for CDT1. This chain is Multicilin (Mcidas), found in Rattus norvegicus (Rat).